The sequence spans 1220 residues: DNA-directed RNA polymerase subunit beta' (1220 aa).

Zn(2+)-binding residues include C60, C62, C75, and C78. Positions 449, 451, and 453 each coordinate Mg(2+). Residues C818, C892, C899, and C902 each coordinate Zn(2+).

It belongs to the RNA polymerase beta' chain family. The RNAP catalytic core consists of 2 alpha, 1 beta, 1 beta' and 1 omega subunit. When a sigma factor is associated with the core the holoenzyme is formed, which can initiate transcription. Requires Mg(2+) as cofactor. Zn(2+) serves as cofactor.

It carries out the reaction RNA(n) + a ribonucleoside 5'-triphosphate = RNA(n+1) + diphosphate. Its function is as follows. DNA-dependent RNA polymerase catalyzes the transcription of DNA into RNA using the four ribonucleoside triphosphates as substrates. The polypeptide is DNA-directed RNA polymerase subunit beta' (Lacticaseibacillus paracasei (strain ATCC 334 / BCRC 17002 / CCUG 31169 / CIP 107868 / KCTC 3260 / NRRL B-441) (Lactobacillus paracasei)).